Consider the following 153-residue polypeptide: Pheromone-binding protein Gp-9 (153 aa).

The first 19 residues, 1 to 19, serve as a signal peptide directing secretion; the sequence is MKTFVLHIFIFAFVAFASA. Cystine bridges form between Cys-37-Cys-77, Cys-73-Cys-129, and Cys-118-Cys-138.

The protein belongs to the PBP/GOBP family. In terms of assembly, homodimer.

The protein localises to the secreted. Colony queen number, a major feature of social organization, is associated with worker genotype for Gp-9. Colonies are headed by either a single reproductive queen (monogyne form) or multiple queens (polygyne form). Differences in worker Gp-9 genotypes between social forms may cause differences in workers' abilities to recognize queens and regulate their numbers. This Solenopsis geminata (Tropical fire ant) protein is Pheromone-binding protein Gp-9.